Consider the following 414-residue polypeptide: MIVKIYPSKISGIIKAPQSKSLAIRLIFLSLFTRVYLHNLVLSEDVIDAIKSVRALGVKVKNNSEFIPPEKLEIKERFIKLKGSATTLRMLIPILAAIGGEVTIDADESLRRRPLNRIVQALSNYGISFSSYSLPLTITGKLSSNEIKISGDESSQYISGLIYALHILNGGSIEILPPISSKSYILLTIDLFKRFGSDVKFYGSKIHVNPNNLVEFQGEVAGDYGLASFYALSALVSGGGITITNLWEPKEYFGDHSIVKIFSEMGASSEYKDGRWFVKAKDKYSPIKIDIDDAPDLAMTIAGLSAIAEGTSEIIGIERLRIKESDRIESIRKILGLYGVGSEVKYNSILIFGINKGMLNSPVTDCLNDHRVAMMSSALALVNGGVITSAECVGKSNPNYWQDLLSLNAKISIE.

3-phosphoshikimate-binding residues include Lys20, Ser21, and Arg25. Residue Lys20 coordinates phosphoenolpyruvate. Residue Arg113 coordinates phosphoenolpyruvate. 3-phosphoshikimate contacts are provided by Ser154, Ser155, Gln156, Ser181, Asp296, and Lys323. Phosphoenolpyruvate is bound at residue Gln156. Residue Asp296 is the Proton acceptor of the active site. Arg327, Arg371, and Lys395 together coordinate phosphoenolpyruvate.

It belongs to the EPSP synthase family. Monomer.

It is found in the cytoplasm. The enzyme catalyses 3-phosphoshikimate + phosphoenolpyruvate = 5-O-(1-carboxyvinyl)-3-phosphoshikimate + phosphate. Its pathway is metabolic intermediate biosynthesis; chorismate biosynthesis. Functionally, catalyzes the transfer of the enolpyruvyl moiety of phosphoenolpyruvate (PEP) to the 5-hydroxyl of shikimate-3-phosphate (S3P) to produce enolpyruvyl shikimate-3-phosphate and inorganic phosphate. The polypeptide is 3-phosphoshikimate 1-carboxyvinyltransferase (Saccharolobus solfataricus (strain ATCC 35092 / DSM 1617 / JCM 11322 / P2) (Sulfolobus solfataricus)).